A 313-amino-acid chain; its full sequence is Protease HtpX homolog (313 aa).

2 consecutive transmembrane segments (helical) span residues 7-24 (AMLLAFMTALFMAVGYLI) and 29-46 (GMMIALVIAAAMNLFSYW). Histidine 130 contributes to the Zn(2+) binding site. Residue glutamate 131 is part of the active site. Position 134 (histidine 134) interacts with Zn(2+). The next 2 membrane-spanning stretches (helical) occupy residues 145–165 (ITATLAGAISMLGNFAFFFGG) and 172–192 (PFGFIGILVAMIVAPLAAMVV). Glutamate 201 lines the Zn(2+) pocket. The tract at residues 282-313 (GNAPPASLREDEPGADGPWGRSASRARKGPWS) is disordered.

It belongs to the peptidase M48B family. It depends on Zn(2+) as a cofactor.

The protein localises to the cell inner membrane. The protein is Protease HtpX homolog of Chelativorans sp. (strain BNC1).